Here is a 143-residue protein sequence, read N- to C-terminus: Hemoglobin subunit alpha (143 aa).

A Globin domain is found at 2-143; the sequence is RFSQDDEVLI…IVHVLISLYR (142 aa). O2 is bound at residue H60. H89 provides a ligand contact to heme b.

Belongs to the globin family. As to quaternary structure, heterotetramer of two alpha chains and two beta chains. In terms of tissue distribution, red blood cells.

Involved in oxygen transport from the lung to the various peripheral tissues. This Lepidosiren paradoxus (South American lungfish) protein is Hemoglobin subunit alpha (HBA).